The chain runs to 88 residues: MAVKIRLRRMGSKRNAHYRLVVADSRKPRDGRFVEEIGYYNPTTEPATVKVDEEKAIKWLKNGAQPSNTVRSLLKKTGVLAKFREQQQ.

It belongs to the bacterial ribosomal protein bS16 family.

The protein is Small ribosomal subunit protein bS16 of Halothermothrix orenii (strain H 168 / OCM 544 / DSM 9562).